The following is a 97-amino-acid chain: Sorbitol dehydrogenase (97 aa).

Cysteine 44 contacts Zn(2+). Position 50 (tyrosine 50) interacts with substrate. Zn(2+) is bound by residues histidine 69 and glutamate 70.

Belongs to the zinc-containing alcohol dehydrogenase family. In terms of assembly, homotetramer. Zn(2+) is required as a cofactor.

It localises to the mitochondrion membrane. Its subcellular location is the cell projection. It is found in the cilium. The protein resides in the flagellum. The catalysed reaction is xylitol + NAD(+) = D-xylulose + NADH + H(+). The enzyme catalyses L-iditol + NAD(+) = keto-L-sorbose + NADH + H(+). It catalyses the reaction keto-D-fructose + NADH + H(+) = D-sorbitol + NAD(+). In terms of biological role, polyol dehydrogenase that catalyzes the reversible NAD(+)-dependent oxidation of various sugar alcohols. Is active with xylitol, L-iditol and D-sorbitol (D-glucitol) as substrates, leading to the C2-oxidized products D-xylulose, L-sorbose and D-fructose, respectively. Is a key enzyme in the polyol pathway that interconverts glucose and fructose via sorbitol, which constitutes an important alternate route for glucose metabolism. May play a role in sperm motility by using sorbitol as an alternative energy source for sperm motility. This Sus scrofa (Pig) protein is Sorbitol dehydrogenase (SORD).